The primary structure comprises 473 residues: Adenosylhomocysteinase (473 aa).

Residues 58 to 62 (HMTIQ), aspartate 135, and glutamate 197 contribute to the substrate site. 198 to 200 (TTT) provides a ligand contact to NAD(+). 2 residues coordinate substrate: lysine 227 and aspartate 231. NAD(+) is bound by residues asparagine 232, valine 265, glutamate 284, asparagine 319, 340–342 (IGH), and asparagine 385. A substrate-binding site is contributed by histidine 342. Histidine 392 lines the substrate pocket. NAD(+) is bound by residues lysine 467 and tyrosine 471.

Belongs to the adenosylhomocysteinase family. In terms of assembly, homotetramer; dimer of dimers. It depends on NAD(+) as a cofactor.

It is found in the cytoplasm. The enzyme catalyses S-adenosyl-L-homocysteine + H2O = L-homocysteine + adenosine. Its pathway is amino-acid biosynthesis; L-homocysteine biosynthesis; L-homocysteine from S-adenosyl-L-homocysteine: step 1/1. In terms of biological role, may play a key role in the regulation of the intracellular concentration of adenosylhomocysteine, which is a strong inhibitor of SAM-dependent methyltransferases. Catalyzes the hydrolysis of S-adenosyl-L-homocysteine into L-homocysteine and adenosine. This is Adenosylhomocysteinase from Bradyrhizobium elkanii.